A 614-amino-acid chain; its full sequence is Dihydroxy-acid dehydratase (614 aa).

Residue Asp81 coordinates Mg(2+). Cys122 is a [2Fe-2S] cluster binding site. Residues Asp123 and Lys124 each contribute to the Mg(2+) site. Position 124 is an N6-carboxylysine (Lys124). A [2Fe-2S] cluster-binding site is contributed by Cys195. Position 491 (Glu491) interacts with Mg(2+). Residue Ser517 is the Proton acceptor of the active site.

Belongs to the IlvD/Edd family. In terms of assembly, homodimer. It depends on [2Fe-2S] cluster as a cofactor. Mg(2+) is required as a cofactor.

The catalysed reaction is (2R)-2,3-dihydroxy-3-methylbutanoate = 3-methyl-2-oxobutanoate + H2O. It catalyses the reaction (2R,3R)-2,3-dihydroxy-3-methylpentanoate = (S)-3-methyl-2-oxopentanoate + H2O. It participates in amino-acid biosynthesis; L-isoleucine biosynthesis; L-isoleucine from 2-oxobutanoate: step 3/4. The protein operates within amino-acid biosynthesis; L-valine biosynthesis; L-valine from pyruvate: step 3/4. Functionally, functions in the biosynthesis of branched-chain amino acids. Catalyzes the dehydration of (2R,3R)-2,3-dihydroxy-3-methylpentanoate (2,3-dihydroxy-3-methylvalerate) into 2-oxo-3-methylpentanoate (2-oxo-3-methylvalerate) and of (2R)-2,3-dihydroxy-3-methylbutanoate (2,3-dihydroxyisovalerate) into 2-oxo-3-methylbutanoate (2-oxoisovalerate), the penultimate precursor to L-isoleucine and L-valine, respectively. This is Dihydroxy-acid dehydratase from Nitrobacter winogradskyi (strain ATCC 25391 / DSM 10237 / CIP 104748 / NCIMB 11846 / Nb-255).